The chain runs to 179 residues: Shikimate kinase (179 aa).

Residue Gly-15–Ser-20 participates in ATP binding. Mg(2+) is bound at residue Thr-19. Asp-37, Arg-61, and Gly-83 together coordinate substrate. Residue Arg-122 participates in ATP binding. Position 142 (Arg-142) interacts with substrate.

This sequence belongs to the shikimate kinase family. As to quaternary structure, monomer. It depends on Mg(2+) as a cofactor.

It is found in the cytoplasm. The catalysed reaction is shikimate + ATP = 3-phosphoshikimate + ADP + H(+). It participates in metabolic intermediate biosynthesis; chorismate biosynthesis; chorismate from D-erythrose 4-phosphate and phosphoenolpyruvate: step 5/7. Functionally, catalyzes the specific phosphorylation of the 3-hydroxyl group of shikimic acid using ATP as a cosubstrate. The sequence is that of Shikimate kinase from Coxiella burnetii (strain Dugway 5J108-111).